We begin with the raw amino-acid sequence, 1372 residues long: Serine protease pic autotransporter (1372 aa).

Residues 1–55 (MNKVYSLKYCPVTGGLIAVSELARRVIKKTCRRLTHILLAGIPAICLCYSQISQA) form the signal peptide. A Peptidase S6 domain is found at 56–301 (GIVRSDIAYQ…NVIPTDYLNQ (246 aa)). Residues H127, D155, and S258 each act as charge relay system in the active site. One can recognise an Autotransporter domain in the interval 1106–1372 (DTNGDAGAWA…AVNANFRYMF (267 aa)).

In terms of processing, cleaved to release the mature protein from the outer membrane.

The protein localises to the periplasm. It is found in the secreted. The protein resides in the cell surface. Its subcellular location is the cell outer membrane. Functionally, involved in intestinal colonization, displays in vitro mucinolytic activity, serum resistance, and hemagglutination. Important to penetrate the intestinal mucus layer. In Shigella flexneri, this protein is Serine protease pic autotransporter (pic).